Consider the following 313-residue polypeptide: Porphobilinogen deaminase (313 aa).

Cysteine 241 bears the S-(dipyrrolylmethanemethyl)cysteine mark.

This sequence belongs to the HMBS family. In terms of assembly, monomer. Dipyrromethane is required as a cofactor.

It carries out the reaction 4 porphobilinogen + H2O = hydroxymethylbilane + 4 NH4(+). It functions in the pathway porphyrin-containing compound metabolism; protoporphyrin-IX biosynthesis; coproporphyrinogen-III from 5-aminolevulinate: step 2/4. The protein operates within porphyrin-containing compound metabolism; chlorophyll biosynthesis. Its function is as follows. Tetrapolymerization of the monopyrrole PBG into the hydroxymethylbilane pre-uroporphyrinogen in several discrete steps. The sequence is that of Porphobilinogen deaminase from Chlorobium phaeobacteroides (strain BS1).